A 1560-amino-acid chain; its full sequence is Lysine-specific demethylase 5C (1560 aa).

The JmjN domain occupies 14–55; that stretch reads CPVFEPSWAEFRDPLGYIAKIRPIAEKSGICKIRPPADWQPP. The ARID domain maps to 79–169; it reads TRVKLNYLDQ…IVYPYEMYQS (91 aa). A compositionally biased stretch (polar residues) spans 197 to 207; the sequence is LRQSVQPSKFN. Residues 197 to 227 are disordered; it reads LRQSVQPSKFNSYGRRAKRLQPDPEPTEEDI. Glycyl lysine isopeptide (Lys-Gly) (interchain with G-Cter in SUMO2) cross-links involve residues Lys-205, Lys-229, Lys-244, and Lys-274. Phosphoserine is present on Ser-287. Lys-295 participates in a covalent cross-link: Glycyl lysine isopeptide (Lys-Gly) (interchain with G-Cter in SUMO2). A phosphoserine mark is found at Ser-301 and Ser-317. The PHD-type 1 zinc finger occupies 326-372; the sequence is VCRMCSRGDEDDKLLLCDGCDDNYHIFCLLPPLPEIPKGVWRCPKCV. Tyr-440 contacts 2-oxoglutarate. Residues 468–634 enclose the JmjC domain; it reads EYATSGWNLN…AGRQCIEHYR (167 aa). 2 residues coordinate Fe cation: His-514 and Glu-516. Residues Ser-522, Asn-524, and Lys-532 each coordinate 2-oxoglutarate. His-602 contributes to the Fe cation binding site. The segment at 707-759 adopts a C5HC2 zinc-finger fold; sequence CIKCKTTCFLSALACYDCPDGLVCLSHINDLCKCSSSRQYLRYRYTLDELPAM. Phosphoserine is present on residues Ser-893 and Ser-897. Residue Lys-1127 forms a Glycyl lysine isopeptide (Lys-Gly) (interchain with G-Cter in SUMO2) linkage. A disordered region spans residues 1161–1181; the sequence is ILQLRRTNSAKPSPLASSSTA. The segment covering 1169 to 1181 has biased composition (low complexity); that stretch reads SAKPSPLASSSTA. The segment at 1187 to 1248 adopts a PHD-type 2 zinc-finger fold; that stretch reads ICVCGQVLAG…DTKFLCPLCM (62 aa). Disordered stretches follow at residues 1316-1371 and 1444-1560; these read QAEP…GSGK and ERHG…QQQL. The span at 1335–1345 shows a compositional bias: basic and acidic residues; it reads PLREGSGKDMP. Ser-1359 carries the phosphoserine modification. Residues 1448–1463 show a composition bias toward basic residues; the sequence is SRARGRALERRRRRKV. A compositionally biased stretch (basic and acidic residues) spans 1464–1481; sequence DRGGEGDDPAREELEPKR. Acidic residues predominate over residues 1488-1503; it reads EAEEVQEEEELEEETG. Over residues 1516–1544 the composition is skewed to polar residues; that stretch reads SPSTQENQNGLEPAEGTTSGPSAPFSTLT.

This sequence belongs to the JARID1 histone demethylase family. In terms of assembly, part of two distinct complexes, one containing E2F6, and the other containing REST. Interacts with ZMYND8. The cofactor is Fe(2+). In terms of tissue distribution, expressed in all tissues examined. Highest levels found in brain and skeletal muscle.

Its subcellular location is the nucleus. The catalysed reaction is N(6),N(6),N(6)-trimethyl-L-lysyl(4)-[histone H3] + 3 2-oxoglutarate + 3 O2 = L-lysyl(4)-[histone H3] + 3 formaldehyde + 3 succinate + 3 CO2. With respect to regulation, the inhibitor KDOAM-25 and others inhibit its demethylase activity, resulting to cell cycle arrest in myeloma cells. Histone demethylase that specifically demethylates 'Lys-4' of histone H3, thereby playing a central role in histone code. Does not demethylate histone H3 'Lys-9', H3 'Lys-27', H3 'Lys-36', H3 'Lys-79' or H4 'Lys-20'. Demethylates trimethylated and dimethylated but not monomethylated H3 'Lys-4'. Participates in transcriptional repression of neuronal genes by recruiting histone deacetylases and REST at neuron-restrictive silencer elements. Represses the CLOCK-BMAL1 heterodimer-mediated transcriptional activation of the core clock component PER2. In Homo sapiens (Human), this protein is Lysine-specific demethylase 5C.